A 229-amino-acid polypeptide reads, in one-letter code: Potassium/proton antiporter CemA (229 aa).

The next 4 helical transmembrane spans lie at Phe-7–Phe-27, Ile-114–Leu-134, Ile-154–Ile-174, and Ile-189–Ile-209.

Belongs to the CemA family.

The protein resides in the plastid. The protein localises to the chloroplast inner membrane. It catalyses the reaction K(+)(in) + H(+)(out) = K(+)(out) + H(+)(in). Its function is as follows. Contributes to K(+)/H(+) antiport activity by supporting proton efflux to control proton extrusion and homeostasis in chloroplasts in a light-dependent manner to modulate photosynthesis. Prevents excessive induction of non-photochemical quenching (NPQ) under continuous-light conditions. Indirectly promotes efficient inorganic carbon uptake into chloroplasts. This Acorus calamus var. americanus (American sweet flag) protein is Potassium/proton antiporter CemA.